The following is a 206-amino-acid chain: Small ribosomal subunit protein uS4 (206 aa).

An S4 RNA-binding domain is found at 98-164; the sequence is MRLDNVVYRL…EKFKTFIENP (67 aa).

This sequence belongs to the universal ribosomal protein uS4 family. As to quaternary structure, part of the 30S ribosomal subunit. Contacts protein S5. The interaction surface between S4 and S5 is involved in control of translational fidelity.

Its function is as follows. One of the primary rRNA binding proteins, it binds directly to 16S rRNA where it nucleates assembly of the body of the 30S subunit. In terms of biological role, with S5 and S12 plays an important role in translational accuracy. The polypeptide is Small ribosomal subunit protein uS4 (Clostridium tetani (strain Massachusetts / E88)).